A 111-amino-acid polypeptide reads, in one-letter code: MIQVLLVIICLAVFPYQGSCIILESGNVNDYEIVYPKKLIVLPTGAMNSPHPCCDPVTCKPKKGEHCISGPCCRNCKFMNSGTICKRARGDDMNDYCTGITPDCPRNPYKD.

Positions 1-20 (MIQVLLVIICLAVFPYQGSC) are cleaved as a signal peptide. The propeptide occupies 21–47 (IILESGNVNDYEIVYPKKLIVLPTGAM). The Disintegrin domain maps to 47–111 (MNSPHPCCDP…PDCPRNPYKD (65 aa)). Disulfide bonds link C53–C76, C67–C73, C72–C97, and C85–C104. Positions 89–91 (RGD) match the Cell attachment site motif.

As to quaternary structure, heterodimer; disulfide-linked.

It is found in the secreted. Its function is as follows. Inhibits ADP-induced platelet aggregation in human platelet-rich plasma (IC(50) is 8 uM). This chain is Disintegrin DS-AN, found in Atheris nitschei (Great lakes bush viper).